We begin with the raw amino-acid sequence, 69 residues long: Neurotoxin Cex7 (69 aa).

Residue Ala1 is a signal peptide. The 66-residue stretch at 2–67 folds into the LCN-type CS-alpha/beta domain; that stretch reads REGYLVSKST…TYPIPGKSCG (66 aa). Cystine bridges form between Cys13-Cys66, Cys17-Cys42, Cys26-Cys47, and Cys30-Cys49. The residue at position 66 (Cys66) is a Cysteine amide. The propeptide occupies 67 to 69; that stretch reads GKK.

Belongs to the long (4 C-C) scorpion toxin superfamily. Sodium channel inhibitor family. Beta subfamily. As to expression, expressed by the venom gland.

The protein resides in the secreted. Beta toxins bind voltage-independently at site-4 of sodium channels (Nav) and shift the voltage of activation toward more negative potentials thereby affecting sodium channel activation and promoting spontaneous and repetitive firing. This is Neurotoxin Cex7 from Centruroides exilicauda (Bark scorpion).